Reading from the N-terminus, the 339-residue chain is Transmembrane protein 120B (339 aa).

The stretch at 1-67 (MSGQLERCER…KHTLQRYKRH (67 aa)) forms a coiled coil. The next 6 membrane-spanning stretches (helical) occupy residues 102 to 124 (GLYL…AKFA), 132 to 152 (FKLY…FVLH), 159 to 179 (VFNF…SILI), 187 to 207 (GWWV…LTWP), 270 to 290 (FLLP…VTLF), and 302 to 322 (QVFV…LTTL).

This sequence belongs to the TMEM120 family. In terms of assembly, heterooligomer with TMEM120A. Expressed in inguinal and subcutaneous white adipose tissue and in brown adipose tissue.

It is found in the nucleus inner membrane. Its function is as follows. Necessary for efficient adipogenesis. Does not show ion channel activity. This is Transmembrane protein 120B from Mus musculus (Mouse).